Reading from the N-terminus, the 290-residue chain is ATP synthase gamma chain (290 aa).

It belongs to the ATPase gamma chain family. As to quaternary structure, F-type ATPases have 2 components, CF(1) - the catalytic core - and CF(0) - the membrane proton channel. CF(1) has five subunits: alpha(3), beta(3), gamma(1), delta(1), epsilon(1). CF(0) has three main subunits: a, b and c.

It localises to the cell inner membrane. Functionally, produces ATP from ADP in the presence of a proton gradient across the membrane. The gamma chain is believed to be important in regulating ATPase activity and the flow of protons through the CF(0) complex. This is ATP synthase gamma chain from Bacteroides fragilis (strain YCH46).